We begin with the raw amino-acid sequence, 356 residues long: Dual-specificity RNA methyltransferase RlmN (356 aa).

Catalysis depends on Glu89, which acts as the Proton acceptor. The region spanning 108–341 is the Radical SAM core domain; the sequence is SHARYTICVS…CTIRESKGLD (234 aa). Cysteines 115 and 346 form a disulfide. Residues Cys122, Cys126, and Cys129 each coordinate [4Fe-4S] cluster. Residues 172–173, Ser204, 227–229, and Asn303 each bind S-adenosyl-L-methionine; these read GE and SLH. The active-site S-methylcysteine intermediate is Cys346.

The protein belongs to the radical SAM superfamily. RlmN family. [4Fe-4S] cluster serves as cofactor.

Its subcellular location is the cytoplasm. It catalyses the reaction adenosine(2503) in 23S rRNA + 2 reduced [2Fe-2S]-[ferredoxin] + 2 S-adenosyl-L-methionine = 2-methyladenosine(2503) in 23S rRNA + 5'-deoxyadenosine + L-methionine + 2 oxidized [2Fe-2S]-[ferredoxin] + S-adenosyl-L-homocysteine. It carries out the reaction adenosine(37) in tRNA + 2 reduced [2Fe-2S]-[ferredoxin] + 2 S-adenosyl-L-methionine = 2-methyladenosine(37) in tRNA + 5'-deoxyadenosine + L-methionine + 2 oxidized [2Fe-2S]-[ferredoxin] + S-adenosyl-L-homocysteine. In terms of biological role, specifically methylates position 2 of adenine 2503 in 23S rRNA and position 2 of adenine 37 in tRNAs. m2A2503 modification seems to play a crucial role in the proofreading step occurring at the peptidyl transferase center and thus would serve to optimize ribosomal fidelity. The chain is Dual-specificity RNA methyltransferase RlmN from Campylobacter jejuni subsp. jejuni serotype O:2 (strain ATCC 700819 / NCTC 11168).